A 774-amino-acid chain; its full sequence is 5-methyltetrahydropteroyltriglutamate--homocysteine methyltransferase (774 aa).

5-methyltetrahydropteroyltri-L-glutamate contacts are provided by residues 23-26 (RELK) and Lys123. Residues 446–448 (IGS) and Glu499 each bind L-homocysteine. L-methionine contacts are provided by residues 446–448 (IGS) and Glu499. 5-methyltetrahydropteroyltri-L-glutamate-binding positions include 530–531 (RC) and Trp576. Asp614 serves as a coordination point for L-homocysteine. An L-methionine-binding site is contributed by Asp614. Glu620 is a binding site for 5-methyltetrahydropteroyltri-L-glutamate. His656, Cys658, and Glu680 together coordinate Zn(2+). Residue His709 is the Proton donor of the active site. Cys741 is a binding site for Zn(2+).

This sequence belongs to the vitamin-B12 independent methionine synthase family. Zn(2+) is required as a cofactor.

The enzyme catalyses 5-methyltetrahydropteroyltri-L-glutamate + L-homocysteine = tetrahydropteroyltri-L-glutamate + L-methionine. It functions in the pathway amino-acid biosynthesis; L-methionine biosynthesis via de novo pathway; L-methionine from L-homocysteine (MetE route): step 1/1. Its function is as follows. Catalyzes the transfer of a methyl group from 5-methyltetrahydrofolate to homocysteine resulting in methionine formation. The protein is 5-methyltetrahydropteroyltriglutamate--homocysteine methyltransferase of Aliivibrio fischeri (strain MJ11) (Vibrio fischeri).